The sequence spans 250 residues: Vitamin B12 import ATP-binding protein BtuD (250 aa).

One can recognise an ABC transporter domain in the interval 3 to 233 (LRQASVLPRL…EVLSPVFGVA (231 aa)). An ATP-binding site is contributed by 29 to 36 (GPNGAGKS).

The protein belongs to the ABC transporter superfamily. Vitamin B12 importer (TC 3.A.1.13.1) family. The complex is composed of two ATP-binding proteins (BtuD), two transmembrane proteins (BtuC) and a solute-binding protein (BtuF).

Its subcellular location is the cell inner membrane. It carries out the reaction an R-cob(III)alamin(out) + ATP + H2O = an R-cob(III)alamin(in) + ADP + phosphate + H(+). Part of the ABC transporter complex BtuCDF involved in vitamin B12 import. Responsible for energy coupling to the transport system. The chain is Vitamin B12 import ATP-binding protein BtuD from Pectobacterium atrosepticum (strain SCRI 1043 / ATCC BAA-672) (Erwinia carotovora subsp. atroseptica).